The chain runs to 375 residues: Succinyl-diaminopimelate desuccinylase (375 aa).

Residue histidine 66 coordinates Zn(2+). Aspartate 68 is a catalytic residue. Residue aspartate 99 participates in Zn(2+) binding. Catalysis depends on glutamate 133, which acts as the Proton acceptor. Positions 134, 162, and 348 each coordinate Zn(2+).

The protein belongs to the peptidase M20A family. DapE subfamily. Homodimer. Zn(2+) is required as a cofactor. Co(2+) serves as cofactor.

The enzyme catalyses N-succinyl-(2S,6S)-2,6-diaminopimelate + H2O = (2S,6S)-2,6-diaminopimelate + succinate. The protein operates within amino-acid biosynthesis; L-lysine biosynthesis via DAP pathway; LL-2,6-diaminopimelate from (S)-tetrahydrodipicolinate (succinylase route): step 3/3. Its function is as follows. Catalyzes the hydrolysis of N-succinyl-L,L-diaminopimelic acid (SDAP), forming succinate and LL-2,6-diaminopimelate (DAP), an intermediate involved in the bacterial biosynthesis of lysine and meso-diaminopimelic acid, an essential component of bacterial cell walls. This is Succinyl-diaminopimelate desuccinylase from Janthinobacterium sp. (strain Marseille) (Minibacterium massiliensis).